The sequence spans 86 residues: uncharacterized protein (86 aa).

The next 3 membrane-spanning stretches (helical) occupy residues 4–24 (ILII…IAAV), 34–54 (MGLV…ILIN), and 64–84 (DIAY…ARVL).

The protein to M.jannaschii MJ1223.

Its subcellular location is the cell membrane. This is an uncharacterized protein from Methanothermobacter thermautotrophicus (strain ATCC 29096 / DSM 1053 / JCM 10044 / NBRC 100330 / Delta H) (Methanobacterium thermoautotrophicum).